A 549-amino-acid polypeptide reads, in one-letter code: Glucose-6-phosphate isomerase (549 aa).

Residue Glu-355 is the Proton donor of the active site. Catalysis depends on residues His-387 and Lys-515.

The protein belongs to the GPI family.

It localises to the cytoplasm. It catalyses the reaction alpha-D-glucose 6-phosphate = beta-D-fructose 6-phosphate. Its pathway is carbohydrate biosynthesis; gluconeogenesis. It functions in the pathway carbohydrate degradation; glycolysis; D-glyceraldehyde 3-phosphate and glycerone phosphate from D-glucose: step 2/4. Its function is as follows. Catalyzes the reversible isomerization of glucose-6-phosphate to fructose-6-phosphate. This Haemophilus influenzae (strain PittGG) protein is Glucose-6-phosphate isomerase.